A 315-amino-acid chain; its full sequence is Probable cell division protein WhiA (315 aa).

The segment at residues 277-311 (SLQELGAMMPSGQISKSGVNHRLRKLNQIAEGYQQ) is a DNA-binding region (H-T-H motif).

Belongs to the WhiA family.

Involved in cell division and chromosome segregation. The protein is Probable cell division protein WhiA of Lacticaseibacillus casei (strain BL23) (Lactobacillus casei).